The sequence spans 220 residues: Response regulator ArlR (220 aa).

Residues 3 to 116 (KILIVEDEQN…ELLARIRAML (114 aa)) enclose the Response regulatory domain. Residue D52 is modified to 4-aspartylphosphate. Positions 122-220 (KNLIDIKGII…VRGVGYVVRQ (99 aa)) form a DNA-binding region, ompR/PhoB-type.

In terms of processing, phosphorylated by ArlS.

Its subcellular location is the cytoplasm. In terms of biological role, member of the two-component regulatory system ArlS/ArlR. The polypeptide is Response regulator ArlR (arlR) (Staphylococcus saprophyticus subsp. saprophyticus (strain ATCC 15305 / DSM 20229 / NCIMB 8711 / NCTC 7292 / S-41)).